A 391-amino-acid chain; its full sequence is Serpin B13 (391 aa).

This sequence belongs to the serpin family. Ov-serpin subfamily. Skin specific.

The protein localises to the cytoplasm. May play a role in the proliferation or differentiation of keratinocytes. In Homo sapiens (Human), this protein is Serpin B13 (SERPINB13).